Consider the following 534-residue polypeptide: MFS transporter fmqE (534 aa).

12 helical membrane passes run 48–68, 109–129, 136–156, 169–189, 194–214, 228–248, 326–346, 349–369, 379–399, 407–427, 447–467, and 478–498; these read LLLF…VCAS, LWTS…GFLA, WTAV…VFSS, GAVV…VAPI, ALLQ…LGIV, IVFG…FLVP, AIGV…GLNV, VFDI…LGWL, LWLW…ALGF, LAIA…TVGV, VAFI…PYMY, and TGFV…FLVP.

This sequence belongs to the major facilitator superfamily. Sugar transporter (TC 2.A.1.1) family.

The protein localises to the cytoplasmic vesicle membrane. In terms of biological role, MFS transporter; part of the gene cluster that mediates the biosynthesis of the antitumor cytotoxic peptidyl alkaloids fumiquinazolines that confer a dual-usage capability to defend against phagocytes in the environment and animal hosts. Probably involved in fumiquinazolines metabolism and transport. The protein is MFS transporter fmqE of Aspergillus fumigatus (strain ATCC MYA-4609 / CBS 101355 / FGSC A1100 / Af293) (Neosartorya fumigata).